We begin with the raw amino-acid sequence, 115 residues long: GSSGSSGSSGSSGSSGSSGSSGSSGSSGSSGSSGSSGSSGSSGSSGSSGSSGSSGSSGSSGSSGSSGSSGSSGSSGSSGSSGSSSSSSSNGSGSSSGSSQSSGSQGGSSSTSSSN.

The interval 1-115 (GSSGSSGSSG…GGSSSTSSSN (115 aa)) is disordered.

In terms of tissue distribution, produced exclusively in the middle (MSG) section of silk glands.

The protein localises to the secreted. Its function is as follows. Provides the silk fibroin thread with a sticky coating. Acts as a cement by sticking silk threads together. This chain is Sericin-1 (SER1), found in Galleria mellonella (Greater wax moth).